Reading from the N-terminus, the 180-residue chain is ATP synthase subunit delta (180 aa).

It belongs to the ATPase delta chain family. As to quaternary structure, F-type ATPases have 2 components, F(1) - the catalytic core - and F(0) - the membrane proton channel. F(1) has five subunits: alpha(3), beta(3), gamma(1), delta(1), epsilon(1). F(0) has three main subunits: a(1), b(2) and c(10-14). The alpha and beta chains form an alternating ring which encloses part of the gamma chain. F(1) is attached to F(0) by a central stalk formed by the gamma and epsilon chains, while a peripheral stalk is formed by the delta and b chains.

The protein localises to the cell membrane. Functionally, f(1)F(0) ATP synthase produces ATP from ADP in the presence of a proton or sodium gradient. F-type ATPases consist of two structural domains, F(1) containing the extramembraneous catalytic core and F(0) containing the membrane proton channel, linked together by a central stalk and a peripheral stalk. During catalysis, ATP synthesis in the catalytic domain of F(1) is coupled via a rotary mechanism of the central stalk subunits to proton translocation. In terms of biological role, this protein is part of the stalk that links CF(0) to CF(1). It either transmits conformational changes from CF(0) to CF(1) or is implicated in proton conduction. The polypeptide is ATP synthase subunit delta (Bacillus cytotoxicus (strain DSM 22905 / CIP 110041 / 391-98 / NVH 391-98)).